The sequence spans 509 residues: GMP synthase [glutamine-hydrolyzing] (509 aa).

Residues 4–194 enclose the Glutamine amidotransferase type-1 domain; sequence LVLVVDFGGQ…LYNICGLENS (191 aa). Cysteine 81 functions as the Nucleophile in the catalytic mechanism. Residues histidine 168 and glutamate 170 contribute to the active site. Residues 195–384 enclose the GMPS ATP-PPase domain; sequence WSMASFAEEK…LGIPHHLVWR (190 aa). 222–228 contributes to the ATP binding site; it reads SGGVDSS.

As to quaternary structure, homodimer.

It catalyses the reaction XMP + L-glutamine + ATP + H2O = GMP + L-glutamate + AMP + diphosphate + 2 H(+). Its pathway is purine metabolism; GMP biosynthesis; GMP from XMP (L-Gln route): step 1/1. Functionally, catalyzes the synthesis of GMP from XMP. The polypeptide is GMP synthase [glutamine-hydrolyzing] (Clostridium perfringens (strain 13 / Type A)).